A 544-amino-acid polypeptide reads, in one-letter code: Chaperonin GroEL 2 (544 aa).

ATP-binding positions include 30 to 33 (TLGP), 87 to 91 (DGTTT), G415, 480 to 482 (NAA), and D496.

It belongs to the chaperonin (HSP60) family. As to quaternary structure, forms a cylinder of 14 subunits composed of two heptameric rings stacked back-to-back. Interacts with the co-chaperonin GroES.

The protein localises to the cytoplasm. The catalysed reaction is ATP + H2O + a folded polypeptide = ADP + phosphate + an unfolded polypeptide.. Together with its co-chaperonin GroES, plays an essential role in assisting protein folding. The GroEL-GroES system forms a nano-cage that allows encapsulation of the non-native substrate proteins and provides a physical environment optimized to promote and accelerate protein folding. The protein is Chaperonin GroEL 2 of Albidiferax ferrireducens (strain ATCC BAA-621 / DSM 15236 / T118) (Rhodoferax ferrireducens).